We begin with the raw amino-acid sequence, 444 residues long: Ribosome biogenesis protein WDR12 homolog (444 aa).

Positions 7–87 (VLVKFVTKLP…ESTLEVEYVP (81 aa)) are ubiquitin-like (UBL) domain. Residues 91–123 (PPQQKNSTPHDDWVSSVDGSRCAPASSSGGSPS) form a disordered region. 3 WD repeats span residues 105–148 (SSVD…VASV), 150–191 (AHAG…EEDA), and 203–242 (GHED…RWAA). A disordered region spans residues 243–264 (GTAEASKKKRKTGTANGSAAAG). WD repeat units follow at residues 272 to 310 (GHLH…AADT), 312 to 352 (NGSK…GSDA), 360 to 400 (AHGG…PLGM), and 403 to 444 (HHTD…YIVS).

The protein belongs to the WD repeat WDR12/YTM1 family.

It is found in the nucleus. It localises to the nucleolus. Its subcellular location is the nucleoplasm. In terms of biological role, required for maturation of ribosomal RNAs and formation of the large ribosomal subunit. This chain is Ribosome biogenesis protein WDR12 homolog, found in Chlamydomonas reinhardtii (Chlamydomonas smithii).